A 231-amino-acid polypeptide reads, in one-letter code: Orotidine 5'-phosphate decarboxylase (231 aa).

Substrate contacts are provided by residues Asp11, Lys33, 60 to 69 (DLKFHDIPNT), Thr120, Arg181, Gln190, Gly210, and Arg211. The active-site Proton donor is the Lys62.

It belongs to the OMP decarboxylase family. Type 1 subfamily. As to quaternary structure, homodimer.

The enzyme catalyses orotidine 5'-phosphate + H(+) = UMP + CO2. It participates in pyrimidine metabolism; UMP biosynthesis via de novo pathway; UMP from orotate: step 2/2. In terms of biological role, catalyzes the decarboxylation of orotidine 5'-monophosphate (OMP) to uridine 5'-monophosphate (UMP). This Pseudoalteromonas atlantica (strain T6c / ATCC BAA-1087) protein is Orotidine 5'-phosphate decarboxylase.